The sequence spans 208 residues: Imidazole glycerol phosphate synthase subunit HisH (208 aa).

Residues 1-206 form the Glutamine amidotransferase type-1 domain; it reads MIVIVDYDTG…KEMTEDEALS (206 aa). Catalysis depends on Cys-79, which acts as the Nucleophile. Residues His-181 and Glu-183 contribute to the active site.

In terms of assembly, heterodimer of HisH and HisF.

Its subcellular location is the cytoplasm. The enzyme catalyses 5-[(5-phospho-1-deoxy-D-ribulos-1-ylimino)methylamino]-1-(5-phospho-beta-D-ribosyl)imidazole-4-carboxamide + L-glutamine = D-erythro-1-(imidazol-4-yl)glycerol 3-phosphate + 5-amino-1-(5-phospho-beta-D-ribosyl)imidazole-4-carboxamide + L-glutamate + H(+). It catalyses the reaction L-glutamine + H2O = L-glutamate + NH4(+). The protein operates within amino-acid biosynthesis; L-histidine biosynthesis; L-histidine from 5-phospho-alpha-D-ribose 1-diphosphate: step 5/9. Functionally, IGPS catalyzes the conversion of PRFAR and glutamine to IGP, AICAR and glutamate. The HisH subunit catalyzes the hydrolysis of glutamine to glutamate and ammonia as part of the synthesis of IGP and AICAR. The resulting ammonia molecule is channeled to the active site of HisF. This Lacticaseibacillus casei (strain BL23) (Lactobacillus casei) protein is Imidazole glycerol phosphate synthase subunit HisH.